Here is a 758-residue protein sequence, read N- to C-terminus: MSKKRGRRHTAKEDSNSDYETDTYGLADGDDKSRPYYLVEDLPCSLEPPRYDTFTYPLSVKDSAVLYSSLLSSRRTWVKGEMFQLYWAKQYMNTKEKEELKKEGIDPDSIDQSAAREKMNKLCDCMMQGGPHQFPIRLFILKNDEVERAWNEAKEAKKRDREVRKKQQEEEKRLKKERKLLRKKLKQEALEKEKEKNKDKVKKPRKPYKKSAKRLEAERLKKEEKAKAAANTSGVKKKISKTSNVKKKKMKAVVRPKPYEEQVMILNLNKMARNDKQLNDLMIKVAGGQASLAEITQFKKYIEKAKAMPPPSGTWKPMLEEVEVTDDGESDEDVKELEVTEKSEDVTPTEVALPKAAVAAKEVKDVVVTPNLPPGTENSGNGKPPSLDESNAQESTDVNKNQPIQRLNISKNVQSVKNDITENTDLASNEHMNEKQVQKTPESTTEHKPDEKPKDAAMSKSNEKKPDEDTAQDTSKDDENKSDKSDSDSDSDSDSDNDSSSSDESDNEDNTSQTKNSIDNTDDGVTSEKADTNTDVSSDKPPDDIKSEGEVAAPRVKRKYRRRSKVKTEEEEEEEKAMQLTTFQQKYSNGADMVFEYVENANVRFLLPKYSILEQLEGEESYLLSFIVVHNRREVALFTTRKLKELNKKKNKEDHIKPEDYNPFEDARCPDPLFSSITLKLTGIPKKFSNIILNSFHPQERVQLYMKSIIDRGSRLSGYNLWYQLDAYDDKELAERLRVGLKEYEQTFKSKRQKKQIL.

The segment covering Met-1 to Thr-10 has biased composition (basic residues). Disordered regions lie at residues Met-1 to Arg-34, Ala-153 to Val-253, and Glu-323 to Ala-577. Residues Asn-151–Ser-233 are a coiled coil. A compositionally biased stretch (basic and acidic residues) spans Ala-153 to Leu-174. Over residues Lys-175–Leu-185 the composition is skewed to basic residues. A compositionally biased stretch (basic and acidic residues) spans Lys-186–Lys-198. A compositionally biased stretch (basic residues) spans Asp-199 to Ala-212. Residues Lys-213–Lys-227 show a composition bias toward basic and acidic residues. Residues Val-235–Val-253 show a composition bias toward basic residues. Residues Glu-323–Lys-335 show a composition bias toward acidic residues. A compositionally biased stretch (basic and acidic residues) spans Glu-336–Asp-345. The span at Val-351–Ala-360 shows a compositional bias: low complexity. Residues Asp-388–Ala-427 show a composition bias toward polar residues. The span at Thr-444–Ser-487 shows a compositional bias: basic and acidic residues. Over residues Asp-488–Asp-509 the composition is skewed to acidic residues. Residues Thr-526–Gly-549 are compositionally biased toward basic and acidic residues. Over residues Arg-555–Lys-565 the composition is skewed to basic residues.

It belongs to the SWC3 family. In terms of assembly, component of the SWR1 chromatin remodeling complex.

It is found in the nucleus. Component of the SWR1 complex which mediates the ATP-dependent exchange of histone H2A for the H2A variant HZT1 leading to transcriptional regulation of selected genes by chromatin remodeling. Involved in chromosome stability. In Kluyveromyces lactis (strain ATCC 8585 / CBS 2359 / DSM 70799 / NBRC 1267 / NRRL Y-1140 / WM37) (Yeast), this protein is SWR1-complex protein 3 (SWC3).